We begin with the raw amino-acid sequence, 520 residues long: Probable methylmalonate-semialdehyde/malonate-semialdehyde dehydrogenase [acylating], mitochondrial (520 aa).

Residues Ala-169, Phe-171, Lys-195, Glu-198, Arg-199, and Ser-248 each coordinate NAD(+). Cys-303 serves as the catalytic Nucleophile. Glu-403 provides a ligand contact to NAD(+).

It belongs to the aldehyde dehydrogenase family. As to quaternary structure, homotetramer.

It is found in the mitochondrion. It carries out the reaction 2-methyl-3-oxopropanoate + NAD(+) + CoA + H2O = propanoyl-CoA + hydrogencarbonate + NADH + H(+). The catalysed reaction is 3-oxopropanoate + NAD(+) + CoA + H2O = hydrogencarbonate + acetyl-CoA + NADH + H(+). Its function is as follows. Probable malonate and methylmalonate semialdehyde dehydrogenase involved in the catabolism of valine, thymine, and compounds catabolized by way of beta-alanine, including uracil and cytidine. The protein is Probable methylmalonate-semialdehyde/malonate-semialdehyde dehydrogenase [acylating], mitochondrial of Drosophila pseudoobscura pseudoobscura (Fruit fly).